Here is a 329-residue protein sequence, read N- to C-terminus: Taste receptor type 2 member 134 (329 aa).

Residues 1–27 (MRCSLRGCVQGRGGKSGVSLSKFSPKK) are Extracellular-facing. Residues 28–48 (MSFFFIFMVIFCIQSLVALLQ) form a helical membrane-spanning segment. Topologically, residues 49–68 (NGFLATVLGREWVRSQGLPA) are cytoplasmic. A helical membrane pass occupies residues 69–89 (GDMIVACLAASRFCLHGVAIV). Over 90–121 (NNFLTFVKLWSQKIYFSVLWDFVNTVNFWCTT) the chain is Extracellular. Residues 122-142 (WLAIFYCVKISSFSHPIFFWI) form a helical membrane-spanning segment. Residues 143-153 (KWRISRSVPRL) are Cytoplasmic-facing. Residues 154–174 (LLGSLVIGGLSAVSSATGNTI) form a helical membrane-spanning segment. Over 175 to 201 (AFQMTACENYTLAYRTRAFYAYYFRCH) the chain is Extracellular. N-linked (GlcNAc...) asparagine glycosylation is present at Asn-183. Residues 202 to 222 (AMLMWIIPFFLFLLSVILLMF) traverse the membrane as a helical segment. Residues 223-251 (SLYRHLEHMRYRRPWSHDYSTQAHTMALK) lie on the Cytoplasmic side of the membrane. Residues 252–272 (SLAFFLVFYTSYVLFLVISVT) form a helical membrane-spanning segment. At 273–282 (RVVNVHSSWH) the chain is on the extracellular side. A helical membrane pass occupies residues 283–303 (WAWEVITYMGILLHSTILTLS). At 304–329 (NPKMRKALKIKFPDLCVARSQDKRRG) the chain is on the cytoplasmic side.

Belongs to the G-protein coupled receptor T2R family. As to expression, expressed in tongue and gastrointestinal tract.

The protein localises to the membrane. Functionally, putative taste receptor which may play a role in the perception of bitterness. In Rattus norvegicus (Rat), this protein is Taste receptor type 2 member 134.